The primary structure comprises 392 residues: Formate-dependent phosphoribosylglycinamide formyltransferase (392 aa).

N(1)-(5-phospho-beta-D-ribosyl)glycinamide contacts are provided by residues 22-23 and Glu-82; that span reads EL. ATP is bound by residues Arg-114, Lys-155, 160-165, 195-198, and Glu-203; these read SSGKGQ and EGVV. An ATP-grasp domain is found at 119 to 308; sequence RLAAEELGLP…EFALHVRAFL (190 aa). 2 residues coordinate Mg(2+): Glu-267 and Glu-279. N(1)-(5-phospho-beta-D-ribosyl)glycinamide-binding positions include Asp-286, Lys-355, and 362-363; that span reads RR.

Belongs to the PurK/PurT family. Homodimer.

The enzyme catalyses N(1)-(5-phospho-beta-D-ribosyl)glycinamide + formate + ATP = N(2)-formyl-N(1)-(5-phospho-beta-D-ribosyl)glycinamide + ADP + phosphate + H(+). It participates in purine metabolism; IMP biosynthesis via de novo pathway; N(2)-formyl-N(1)-(5-phospho-D-ribosyl)glycinamide from N(1)-(5-phospho-D-ribosyl)glycinamide (formate route): step 1/1. In terms of biological role, involved in the de novo purine biosynthesis. Catalyzes the transfer of formate to 5-phospho-ribosyl-glycinamide (GAR), producing 5-phospho-ribosyl-N-formylglycinamide (FGAR). Formate is provided by PurU via hydrolysis of 10-formyl-tetrahydrofolate. This is Formate-dependent phosphoribosylglycinamide formyltransferase from Salmonella schwarzengrund (strain CVM19633).